A 335-amino-acid polypeptide reads, in one-letter code: Nuclear distribution protein nudE homolog 1 (335 aa).

Positions 1–93 are self-association; sequence MEDSGKTFSS…VQHSEGYRQI (93 aa). The stretch at 18–188 forms a coiled coil; it reads WKDLAMTYKQ…ELAVQQKQEK (171 aa). Positions 88-156 are interaction with PAFAH1B1; it reads EGYRQISALE…ERNAFLESEL (69 aa). The interaction with CENPF stretch occupies residues 167–290; that stretch reads QRLKDEARDL…QSPNRTGGPA (124 aa). The tract at residues 181 to 246 is disordered; the sequence is AVQQKQEKPR…DDSTGGTPLT (66 aa). The segment covering 204-214 has biased composition (polar residues); that stretch reads TAVQATGSVPS. Serine 211 is subject to Phosphoserine. Threonine 215 and threonine 228 each carry phosphothreonine. Serine 231 and serine 239 each carry phosphoserine. Phosphothreonine is present on residues threonine 243 and threonine 246. Cysteine 274 carries the S-palmitoyl cysteine; by ZDHHC2, ZDHHC3 and ZDHHC7 lipid modification. The disordered stretch occupies residues 279–335; sequence YDQSPNRTGGPASGRSSKNRDGGERRPSSTSVPLGDKGLDTSCRWLSKSTTRSSSSC. Position 282 is a phosphoserine (serine 282). Basic and acidic residues predominate over residues 296–305; that stretch reads KNRDGGERRP. A Phosphoserine modification is found at serine 309. Over residues 325–335 the composition is skewed to low complexity; the sequence is SKSTTRSSSSC.

It belongs to the nudE family. As to quaternary structure, homodimer. Interacts with CNTRL, LIS1, dynein, SLMAP and TCP1. Interacts with CENPF, dynactin, tubulin gamma, PAFAH1B1, PCM1 and PCNT. Interacts with ZNF365. Interacts with GTP-bound RAB9A and RAB9B; the interaction leads to RAB9-dynein motor tethering. Interacts (via C-terminus) with MCRS1 (via C-terminus); phosphorylation of NDE1 inhibits the interaction. Post-translationally, phosphorylated in mitosis. Phosphorylated in vitro by CDC2. Phosphorylation at Thr-246 is essential for the G2/M transition. In terms of tissue distribution, expressed in the neuroepithelium throughout the developing brain, including the cerebral cortex and cerebellum.

It localises to the cytoplasm. The protein resides in the cytoskeleton. Its subcellular location is the microtubule organizing center. It is found in the centrosome. The protein localises to the chromosome. It localises to the centromere. The protein resides in the kinetochore. Its subcellular location is the spindle. It is found in the cleavage furrow. The protein localises to the cytoplasmic vesicle membrane. In terms of biological role, required for centrosome duplication and formation and function of the mitotic spindle. Essential for the development of the cerebral cortex. May regulate the production of neurons by controlling the orientation of the mitotic spindle during division of cortical neuronal progenitors of the proliferative ventricular zone of the brain. Orientation of the division plane perpendicular to the layers of the cortex gives rise to two proliferative neuronal progenitors whereas parallel orientation of the division plane yields one proliferative neuronal progenitor and a postmitotic neuron. A premature shift towards a neuronal fate within the progenitor population may result in an overall reduction in the final number of neurons and an increase in the number of neurons in the deeper layers of the cortex. Acts as a RAB9A/B effector that tethers RAB9-associated late endosomes to the dynein motor for their retrograde transport to the trans-Golgi network. The polypeptide is Nuclear distribution protein nudE homolog 1 (Homo sapiens (Human)).